Reading from the N-terminus, the 631-residue chain is 1-deoxy-D-xylulose-5-phosphate synthase (631 aa).

Thiamine diphosphate is bound by residues H73 and 114 to 116; that span reads SHA. D145 provides a ligand contact to Mg(2+). Residues 146–147, N175, Y286, and E368 each bind thiamine diphosphate; that span reads GA. Position 175 (N175) interacts with Mg(2+).

It belongs to the transketolase family. DXPS subfamily. As to quaternary structure, homodimer. Requires Mg(2+) as cofactor. The cofactor is thiamine diphosphate.

The enzyme catalyses D-glyceraldehyde 3-phosphate + pyruvate + H(+) = 1-deoxy-D-xylulose 5-phosphate + CO2. It functions in the pathway metabolic intermediate biosynthesis; 1-deoxy-D-xylulose 5-phosphate biosynthesis; 1-deoxy-D-xylulose 5-phosphate from D-glyceraldehyde 3-phosphate and pyruvate: step 1/1. Catalyzes the acyloin condensation reaction between C atoms 2 and 3 of pyruvate and glyceraldehyde 3-phosphate to yield 1-deoxy-D-xylulose-5-phosphate (DXP). This chain is 1-deoxy-D-xylulose-5-phosphate synthase, found in Nocardia farcinica (strain IFM 10152).